Here is a 275-residue protein sequence, read N- to C-terminus: T-cell ecto-ADP-ribosyltransferase 2 (275 aa).

Residues 1-20 (MPSNICKFFLTWWLIQQVTG) form the signal peptide. Disulfide bonds link Cys41–Cys243 and Cys141–Cys193. The TR mART core domain occupies 61–238 (AKLKVAWEEA…IFLDSPKRKK (178 aa)). Positions 98, 146, and 164 each coordinate NAD(+). Arg146 is an active-site residue. Ser167 is an active-site residue. NAD(+) is bound at residue Ser202. The residue at position 204 (Arg204) is an ADP-ribosylarginine; by autocatalysis. Glu209 is a catalytic residue. A lipid anchor (GPI-anchor amidated serine) is attached at Ser246. Positions 247–275 (SAGARESCVSLFLVVLPSLLVQLLCLAEP) are cleaved as a propeptide — removed in mature form.

It belongs to the Arg-specific ADP-ribosyltransferase family. As to expression, postthymic T-cells.

The protein resides in the cell membrane. The catalysed reaction is L-arginyl-[protein] + NAD(+) = N(omega)-(ADP-D-ribosyl)-L-arginyl-[protein] + nicotinamide + H(+). It catalyses the reaction NAD(+) + H2O = ADP-D-ribose + nicotinamide + H(+). Has both NAD(+) glycohydrolase and ADP-ribosyltransferase activity (to a lesser extent). The sequence is that of T-cell ecto-ADP-ribosyltransferase 2 (Art2b) from Rattus norvegicus (Rat).